Consider the following 329-residue polypeptide: D-alanine--D-alanine ligase (329 aa).

Residues 120-326 (KLWYDALDIP…FHEFLEDCIN (207 aa)) form the ATP-grasp domain. Position 150-205 (150-205 (AFEKWGKVFVKAARQGSSVGCYSVAEKQAIAKAVNDAFGYSDQVLVEKAVKPRELE)) interacts with ATP. Mg(2+) is bound by residues D280, E293, and N295.

The protein belongs to the D-alanine--D-alanine ligase family. Mg(2+) serves as cofactor. Mn(2+) is required as a cofactor.

The protein resides in the cytoplasm. It catalyses the reaction 2 D-alanine + ATP = D-alanyl-D-alanine + ADP + phosphate + H(+). Its pathway is cell wall biogenesis; peptidoglycan biosynthesis. Functionally, cell wall formation. This Vibrio parahaemolyticus serotype O3:K6 (strain RIMD 2210633) protein is D-alanine--D-alanine ligase.